Consider the following 383-residue polypeptide: NIPA-like protein 2 (383 aa).

N-linked (GlcNAc...) asparagine glycosylation is found at asparagine 23 and asparagine 33. Helical transmembrane passes span 46 to 66 (IHLF…ISLN), 88 to 108 (VLWL…FAAY), 115 to 135 (LIAP…VLFL), 144 to 164 (LLGM…APNI), 177 to 197 (FVGW…CILL), 208 to 228 (IVVL…SVKA), 243 to 263 (LTYA…VFQV), 278 to 298 (VVPV…IIFY), and 306 to 326 (FLTV…VFLV). The segment at 352 to 383 (DKVQPDSNGLSYGTLPDGGDSTRGQCGEKKES) is disordered.

Belongs to the NIPA family.

The protein localises to the membrane. This Mus musculus (Mouse) protein is NIPA-like protein 2 (Nipal2).